The primary structure comprises 128 residues: Cytochrome c-type biogenesis protein CcmE (128 aa).

The Cytoplasmic portion of the chain corresponds to 1-8; it reads MQKRVRNR. Residues 9–29 form a helical; Signal-anchor for type II membrane protein membrane-spanning segment; sequence LITIIICFCSAALGISIVLYN. Topologically, residues 30–128 are periplasmic; it reads LEKNIVFFLP…KHDENYRPPS (99 aa). Residues His120 and Tyr124 each contribute to the heme site.

Belongs to the CcmE/CycJ family.

The protein localises to the cell inner membrane. Functionally, heme chaperone required for the biogenesis of c-type cytochromes. Transiently binds heme delivered by CcmC and transfers the heme to apo-cytochromes in a process facilitated by CcmF and CcmH. This is Cytochrome c-type biogenesis protein CcmE from Rickettsia felis (strain ATCC VR-1525 / URRWXCal2) (Rickettsia azadi).